Consider the following 485-residue polypeptide: NGFI-A-binding protein 1 (485 aa).

The tract at residues 4–82 (ALPRTLGELQ…RDWVTNPGLF (79 aa)) is NCD1. Glycyl lysine isopeptide (Lys-Gly) (interchain with G-Cter in SUMO2) cross-links involve residues K126, K129, and K143. The segment at 160–187 (WQGHHATESEHSLSPADVGSPASPKESS) is disordered. Phosphoserine occurs at positions 171 and 182. K211 participates in a covalent cross-link: Glycyl lysine isopeptide (Lys-Gly) (interchain with G-Cter in SUMO2). Residues 220-309 (LLKNNKKLAK…ARQVSREVTY (90 aa)) are NCD2. Positions 306–337 (EVTYKYTYRTTRLKCGERDELSPKRIKVEDGF) are necessary for nuclear localization. S327 carries the phosphoserine modification. K332 participates in a covalent cross-link: Glycyl lysine isopeptide (Lys-Gly) (interchain with G-Cter in SUMO1); alternate. A Glycyl lysine isopeptide (Lys-Gly) (interchain with G-Cter in SUMO2); alternate cross-link involves residue K332. Glycyl lysine isopeptide (Lys-Gly) (interchain with G-Cter in SUMO2) cross-links involve residues K354, K368, and K372. The disordered stretch occupies residues 398 to 432 (RQSSGEHSPDGLPSDGSDGQGERPLNLRMPNVQNR). The residue at position 405 (S405) is a Phosphoserine. Glycyl lysine isopeptide (Lys-Gly) (interchain with G-Cter in SUMO2) cross-links involve residues K452, K463, and K475. K478 participates in a covalent cross-link: Glycyl lysine isopeptide (Lys-Gly) (interchain with G-Cter in SUMO1); alternate. Residue K478 forms a Glycyl lysine isopeptide (Lys-Gly) (interchain with G-Cter in SUMO2); alternate linkage.

Belongs to the NAB family. As to quaternary structure, homomultimers may associate with EGR1 bound to DNA.

It localises to the nucleus. In terms of biological role, acts as a transcriptional repressor for zinc finger transcription factors EGR1 and EGR2. The chain is NGFI-A-binding protein 1 (NAB1) from Mesocricetus auratus (Golden hamster).